The sequence spans 217 residues: Ribonuclease HII (217 aa).

The RNase H type-2 domain occupies 16–217 (YCIAGVDEVG…VARVLGTYHD (202 aa)). A divalent metal cation-binding residues include Asp22, Glu23, and Asp114.

It belongs to the RNase HII family. Requires Mn(2+) as cofactor. Mg(2+) is required as a cofactor.

Its subcellular location is the cytoplasm. It catalyses the reaction Endonucleolytic cleavage to 5'-phosphomonoester.. Its function is as follows. Endonuclease that specifically degrades the RNA of RNA-DNA hybrids. This Colwellia psychrerythraea (strain 34H / ATCC BAA-681) (Vibrio psychroerythus) protein is Ribonuclease HII.